The primary structure comprises 365 residues: Flagellar P-ring protein (365 aa).

The signal sequence occupies residues 1–19; the sequence is MMLSLCAIAGLLLAPSIQA.

Belongs to the FlgI family. In terms of assembly, the basal body constitutes a major portion of the flagellar organelle and consists of four rings (L,P,S, and M) mounted on a central rod.

Its subcellular location is the periplasm. It localises to the bacterial flagellum basal body. In terms of biological role, assembles around the rod to form the L-ring and probably protects the motor/basal body from shearing forces during rotation. The polypeptide is Flagellar P-ring protein (Sodalis glossinidius (strain morsitans)).